A 265-amino-acid chain; its full sequence is Small ribosomal subunit protein uS3 (265 aa).

Positions 39–107 constitute a KH type-2 domain; sequence VREFLKKKLK…PVHVNIEEIR (69 aa). The tract at residues 211-265 is disordered; sequence NDAPVVEEPQEDRRRRPGRPEGRRREGEGRPAGNRRGGAGAGRRAAPGADAKSGE. Positions 221 to 239 are enriched in basic and acidic residues; it reads EDRRRRPGRPEGRRREGEG.

This sequence belongs to the universal ribosomal protein uS3 family. Part of the 30S ribosomal subunit. Forms a tight complex with proteins S10 and S14.

Its function is as follows. Binds the lower part of the 30S subunit head. Binds mRNA in the 70S ribosome, positioning it for translation. The polypeptide is Small ribosomal subunit protein uS3 (Cupriavidus metallidurans (strain ATCC 43123 / DSM 2839 / NBRC 102507 / CH34) (Ralstonia metallidurans)).